The sequence spans 258 residues: UPF0246 protein YaaA (258 aa).

The protein belongs to the UPF0246 family.

This Escherichia coli O17:K52:H18 (strain UMN026 / ExPEC) protein is UPF0246 protein YaaA.